The sequence spans 411 residues: Protein translocase subunit SecY (411 aa).

A run of 10 helical transmembrane segments spans residues 13–33 (FTLL…PGID), 52–72 (IFSG…VPYI), 111–131 (ALGW…PYVF), 135–155 (FTFV…IMWL), 163–180 (GIGN…VSGL), 197–217 (SIKF…TIFV), 252–272 (GVMP…LTQL), 291–311 (LYLV…TSIV), 350–370 (FLGA…EKVA), and 377–397 (GLGA…AKQI).

Belongs to the SecY/SEC61-alpha family. As to quaternary structure, component of the plastid Sec protein translocase complex, which is composed of at least SecY, SecE and SecG.

It localises to the plastid. The protein localises to the chloroplast thylakoid membrane. Its function is as follows. The central subunit of the protein translocation channel SecYE. Consists of two halves formed by TMs 1-5 and 6-10. These two domains form a lateral gate at the front which open onto the bilayer between TMs 2 and 7, and are clamped together by SecE at the back. The channel is closed by both a pore ring composed of hydrophobic SecY resides and a short helix (helix 2A) on the extracellular side of the membrane which forms a plug. The protein is Protein translocase subunit SecY of Porphyra purpurea (Red seaweed).